The sequence spans 249 residues: Ribonuclease 3 (249 aa).

Residues 20 to 149 enclose the RNase III domain; the sequence is FKKFQERISV…FIGALYLDQG (130 aa). Glu-62 provides a ligand contact to Mg(2+). Residue Asp-66 is part of the active site. Mg(2+) contacts are provided by Asp-135 and Glu-138. The active site involves Glu-138. Residues 175–244 enclose the DRBM domain; the sequence is DFKSQLQEFV…AQEALAKLQK (70 aa). The tract at residues 225–249 is disordered; that stretch reads RSKKEAEQHAAQEALAKLQKHHMKQ.

This sequence belongs to the ribonuclease III family. As to quaternary structure, homodimer. It depends on Mg(2+) as a cofactor.

It localises to the cytoplasm. It carries out the reaction Endonucleolytic cleavage to 5'-phosphomonoester.. Its function is as follows. Digests double-stranded RNA. Involved in the processing of primary rRNA transcript to yield the immediate precursors to the large and small rRNAs (23S and 16S). Processes some mRNAs, and tRNAs when they are encoded in the rRNA operon. Processes pre-crRNA and tracrRNA of type II CRISPR loci if present in the organism. The chain is Ribonuclease 3 from Bacillus licheniformis (strain ATCC 14580 / DSM 13 / JCM 2505 / CCUG 7422 / NBRC 12200 / NCIMB 9375 / NCTC 10341 / NRRL NRS-1264 / Gibson 46).